The primary structure comprises 101 residues: Secreted RxLR effector protein 64 (101 aa).

A signal peptide spans 1-23 (MMSPPMTTTLMFILNYAIISFHG). A RxLR motif is present at residues 48–51 (RELR). A helical membrane pass occupies residues 67–87 (LQPILPLPLCLPFPLVPASIF).

This sequence belongs to the RxLR effector family.

It is found in the secreted. It localises to the host cytoplasm. The protein resides in the host nucleus. Its subcellular location is the membrane. Its function is as follows. Effector that acts as a broad suppressor of cell death to interrupt plant immunity. Inhibits cell death induced by cell death-inducing proteins, including the PAMP elicitor INF1 from P.infestans. This is Secreted RxLR effector protein 64 from Plasmopara viticola (Downy mildew of grapevine).